The chain runs to 521 residues: Cytochrome P450 52A9 (521 aa).

Cys468 lines the heme pocket.

It belongs to the cytochrome P450 family. The cofactor is heme.

It localises to the membrane. Its function is as follows. Together with an NADPH cytochrome P450 the enzyme system catalyzes the terminal hydroxylation as the first step in the assimilation of alkanes and fatty acids. The protein is Cytochrome P450 52A9 (CYP52A9) of Candida maltosa (Yeast).